The sequence spans 106 residues: MPRPHQRTRSLRRVYVRTPGGETKIHYEKRRPGPARCAICGRPLNGVPRLRPVELRKLPKTAKRPERMYGGVLCAECLEKLLKKSIRSQVLAQLEQLRRSVAAGQS.

The protein belongs to the eukaryotic ribosomal protein eL34 family.

The polypeptide is Large ribosomal subunit protein eL34 (Hyperthermus butylicus (strain DSM 5456 / JCM 9403 / PLM1-5)).